Here is a 175-residue protein sequence, read N- to C-terminus: Bifunctional protein PyrR (175 aa).

Positions 98–110 (VIIIDDVLYTGRT) match the PRPP-binding motif.

It belongs to the purine/pyrimidine phosphoribosyltransferase family. PyrR subfamily. As to quaternary structure, homodimer and homohexamer; in equilibrium.

The enzyme catalyses UMP + diphosphate = 5-phospho-alpha-D-ribose 1-diphosphate + uracil. Functionally, regulates transcriptional attenuation of the pyrimidine nucleotide (pyr) operon by binding in a uridine-dependent manner to specific sites on pyr mRNA. This disrupts an antiterminator hairpin in the RNA and favors formation of a downstream transcription terminator, leading to a reduced expression of downstream genes. In terms of biological role, also displays a weak uracil phosphoribosyltransferase activity which is not physiologically significant. The chain is Bifunctional protein PyrR from Staphylococcus carnosus (strain TM300).